The following is a 108-amino-acid chain: MIISTTTAIEGRPVQGYLGVVTGEAILGANVFADFFAKIRDIVGGRSAAYERELRKARQIAMDEMTREARELGADGVIGVDIDYETIAVPEGGSMLMVSVSGTAVKLS.

The protein belongs to the UPF0145 family.

This chain is UPF0145 protein gll1048, found in Gloeobacter violaceus (strain ATCC 29082 / PCC 7421).